Consider the following 146-residue polypeptide: Small ribosomal subunit protein uS5 (146 aa).

The 64-residue stretch at 8-71 (FEESIVNIGR…DNAFKNLSKV (64 aa)) folds into the S5 DRBM domain.

It belongs to the universal ribosomal protein uS5 family. In terms of assembly, part of the 30S ribosomal subunit. Contacts proteins S4 and S8.

Its function is as follows. With S4 and S12 plays an important role in translational accuracy. In terms of biological role, located at the back of the 30S subunit body where it stabilizes the conformation of the head with respect to the body. The protein is Small ribosomal subunit protein uS5 of Sulfurimonas denitrificans (strain ATCC 33889 / DSM 1251) (Thiomicrospira denitrificans (strain ATCC 33889 / DSM 1251)).